The following is a 345-amino-acid chain: Ferrochelatase (345 aa).

Histidine 215 and glutamate 296 together coordinate Fe cation.

Belongs to the ferrochelatase family.

It is found in the cytoplasm. It catalyses the reaction heme b + 2 H(+) = protoporphyrin IX + Fe(2+). It functions in the pathway porphyrin-containing compound metabolism; protoheme biosynthesis; protoheme from protoporphyrin-IX: step 1/1. Catalyzes the ferrous insertion into protoporphyrin IX. The polypeptide is Ferrochelatase (Rhodopseudomonas palustris (strain BisB5)).